Here is a 119-residue protein sequence, read N- to C-terminus: Large ribosomal subunit protein bL19 (119 aa).

It belongs to the bacterial ribosomal protein bL19 family.

In terms of biological role, this protein is located at the 30S-50S ribosomal subunit interface and may play a role in the structure and function of the aminoacyl-tRNA binding site. The protein is Large ribosomal subunit protein bL19 of Pseudoalteromonas translucida (strain TAC 125).